A 438-amino-acid polypeptide reads, in one-letter code: Aspartate--tRNA(Asp/Asn) ligase (438 aa).

Glu176 contacts L-aspartate. The aspartate stretch occupies residues 198-201 (QLYK). Arg220 serves as a coordination point for L-aspartate. ATP contacts are provided by residues 220–222 (RAE), 228–230 (RHL), and Glu361. Positions 361 and 364 each coordinate Mg(2+). L-aspartate is bound by residues Ser364 and Arg368. 409-412 (GADR) contributes to the ATP binding site.

This sequence belongs to the class-II aminoacyl-tRNA synthetase family. Type 2 subfamily. Homodimer. It depends on Mg(2+) as a cofactor.

It is found in the cytoplasm. It carries out the reaction tRNA(Asx) + L-aspartate + ATP = L-aspartyl-tRNA(Asx) + AMP + diphosphate. In terms of biological role, aspartyl-tRNA synthetase with relaxed tRNA specificity since it is able to aspartylate not only its cognate tRNA(Asp) but also tRNA(Asn). Reaction proceeds in two steps: L-aspartate is first activated by ATP to form Asp-AMP and then transferred to the acceptor end of tRNA(Asp/Asn). The protein is Aspartate--tRNA(Asp/Asn) ligase of Methanocaldococcus jannaschii (strain ATCC 43067 / DSM 2661 / JAL-1 / JCM 10045 / NBRC 100440) (Methanococcus jannaschii).